Here is a 297-residue protein sequence, read N- to C-terminus: Protein-methionine-sulfoxide reductase catalytic subunit MsrP (297 aa).

Positions 1–35 (MLITPEKLYKQRRNFLKLGAGALISSSVLASKLSA) form a signal peptide, tat-type signal. Residues 62 to 63 (YE), Cys-116, Thr-151, Asn-201, Arg-206, and 217 to 219 (SIK) each bind Mo-molybdopterin.

The protein belongs to the MsrP family. As to quaternary structure, heterodimer of a catalytic subunit (MsrP) and a heme-binding subunit (MsrQ). The cofactor is Mo-molybdopterin. Post-translationally, predicted to be exported by the Tat system. The position of the signal peptide cleavage has not been experimentally proven.

It is found in the periplasm. It carries out the reaction L-methionyl-[protein] + a quinone + H2O = L-methionyl-(S)-S-oxide-[protein] + a quinol. The catalysed reaction is L-methionyl-[protein] + a quinone + H2O = L-methionyl-(R)-S-oxide-[protein] + a quinol. Part of the MsrPQ system that repairs oxidized periplasmic proteins containing methionine sulfoxide residues (Met-O), using respiratory chain electrons. Thus protects these proteins from oxidative-stress damage caused by reactive species of oxygen and chlorine generated by the host defense mechanisms. MsrPQ is essential for the maintenance of envelope integrity under bleach stress, rescuing a wide series of structurally unrelated periplasmic proteins from methionine oxidation. The catalytic subunit MsrP is non-stereospecific, being able to reduce both (R-) and (S-) diastereoisomers of methionine sulfoxide. This Campylobacter jejuni subsp. jejuni serotype O:2 (strain ATCC 700819 / NCTC 11168) protein is Protein-methionine-sulfoxide reductase catalytic subunit MsrP.